The chain runs to 318 residues: sn-1 stearoyl-lipid 9-desaturase (318 aa).

Helical transmembrane passes span 56–76 and 80–100; these read VIFF…PQFF and AVGM…TLGF. The Histidine box-1 signature appears at 101-106; sequence HRCISH. The helical transmembrane segment at 117–137 threads the bilayer; that stretch reads YIFVICGTLACQGGVFEWVGL. The short motif at 138–142 is the Histidine box-2 element; sequence HRMHH. Residues 201–221 traverse the membrane as a helical segment; the sequence is VALGLILFALGGWPFVIWGIF. Residues 271 to 275 carry the Histidine box-3 motif; the sequence is HHAYQ.

The protein belongs to the fatty acid desaturase type 2 family. The cofactor is Fe(2+).

It is found in the cellular thylakoid membrane. It catalyses the reaction a 1-octadecanoyl 2-acyl-glycerolipid + 2 reduced [2Fe-2S]-[ferredoxin] + O2 + 2 H(+) = a 1-[(9Z)-octadecenoyl]-2-acyl-glycerolipid + 2 oxidized [2Fe-2S]-[ferredoxin] + 2 H2O. The protein operates within lipid metabolism; polyunsaturated fatty acid biosynthesis. Functionally, desaturase involved in fatty acid biosynthesis. Introduces a double bond at carbon 9 of stearoyl groups (18:0) attached to the sn-1 position of the glycerol moiety of membrane glycerolipids. Does not desaturate palmitic acid (16:0), palmitoleic acid (16:1) and cis-vaccenic acid (18:1). The chain is sn-1 stearoyl-lipid 9-desaturase from Synechocystis sp. (strain ATCC 27184 / PCC 6803 / Kazusa).